A 152-amino-acid polypeptide reads, in one-letter code: UPF0266 membrane protein KPN78578_23010 (152 aa).

3 helical membrane passes run 6–26 (LVII…QFIM), 45–65 (VDGM…ITQH), and 67–87 (TAIT…LFWI).

It belongs to the UPF0266 family.

The protein resides in the cell inner membrane. In Klebsiella pneumoniae subsp. pneumoniae (strain ATCC 700721 / MGH 78578), this protein is UPF0266 membrane protein KPN78578_23010.